The primary structure comprises 422 residues: MPEVKVPELAESITEGTIAEWLKNVGDSVEKGEAILELETDKVNVEVVSEEAGVLSEQLASEGDTVEVGQAIAIIGEGSGNASKENSNDNTPQQNEETNNKKEETTNNSVDKAEVNQANDDNQQRINATPSARRYARENGVNLAEVSPKTNDVVRKEDIDKKQQAPASTQTTQQAPAKEEKKYNQYPTKPVIREKMSRRKKTAAKKLLEVSNNTAMLTTFNEVDMTNVMELRKRKKEQFMKDHDGTKLGFMSFFTKASVAALKKYPEVNAEIDGDDMITKQYYDIGVAVSTDDGLLVPFVRDCDKKNFAEIEAEIANLAVKAREKKLGLDDMVNGSFTITNGGIFGSMMSTPIINGNQAAILGMHSIITRPIAIDQDTIENRPMMYIALSYDHRIIDGKEAVGFLKTIKELIENPEDLLLES.

The Lipoyl-binding domain maps to 1 to 76; the sequence is MPEVKVPELA…EVGQAIAIIG (76 aa). The residue at position 42 (lysine 42) is an N6-lipoyllysine. The disordered stretch occupies residues 77 to 184; sequence EGSGNASKEN…APAKEEKKYN (108 aa). Composition is skewed to polar residues over residues 80–94 and 116–130; these read GNAS…TPQQ and NQAN…NATP. The Peripheral subunit-binding (PSBD) domain occupies 127–163; the sequence is NATPSARRYARENGVNLAEVSPKTNDVVRKEDIDKKQ. The span at 152–163 shows a compositional bias: basic and acidic residues; it reads DVVRKEDIDKKQ. A compositionally biased stretch (low complexity) spans 164 to 176; the sequence is QAPASTQTTQQAP. Residues histidine 393 and aspartate 397 contribute to the active site.

It belongs to the 2-oxoacid dehydrogenase family. As to quaternary structure, forms a 24-polypeptide structural core with octahedral symmetry. Part of the 2-oxoglutarate dehydrogenase (OGDH) complex composed of E1 (2-oxoglutarate dehydrogenase), E2 (dihydrolipoamide succinyltransferase) and E3 (dihydrolipoamide dehydrogenase); the complex contains multiple copies of the three enzymatic components (E1, E2 and E3). Requires (R)-lipoate as cofactor.

The catalysed reaction is N(6)-[(R)-dihydrolipoyl]-L-lysyl-[protein] + succinyl-CoA = N(6)-[(R)-S(8)-succinyldihydrolipoyl]-L-lysyl-[protein] + CoA. The protein operates within amino-acid degradation; L-lysine degradation via saccharopine pathway; glutaryl-CoA from L-lysine: step 6/6. Its function is as follows. E2 component of the 2-oxoglutarate dehydrogenase (OGDH) complex which catalyzes the second step in the conversion of 2-oxoglutarate to succinyl-CoA and CO(2). The protein is Dihydrolipoyllysine-residue succinyltransferase component of 2-oxoglutarate dehydrogenase complex (odhB) of Staphylococcus aureus (strain Mu50 / ATCC 700699).